Reading from the N-terminus, the 502-residue chain is Sulfate adenylyltransferase (502 aa).

Positions 1–167 (MPSPHGGVLQ…LEAIQLPVHY (167 aa)) are N-terminal. Positions 168 to 393 (DYPGWRKTPA…LRESNPSRPK (226 aa)) are catalytic. A sulfate-binding site is contributed by glutamine 195. ATP contacts are provided by residues 195–198 (QTRN) and 289–292 (GRDH). Active-site residues include threonine 196, arginine 197, and asparagine 198. Sulfate is bound at residue arginine 197. Alanine 293 is a binding site for sulfate. Valine 331 serves as a coordination point for ATP. Residues 394 to 502 (QGFALVLSET…FLEDQGFFQF (109 aa)) are required for oligomerization; adenylyl-sulfate kinase-like.

It belongs to the sulfate adenylyltransferase family. Homohexamer. Dimer of trimers.

Its subcellular location is the cytoplasm. The catalysed reaction is sulfate + ATP + H(+) = adenosine 5'-phosphosulfate + diphosphate. It participates in sulfur metabolism; hydrogen sulfide biosynthesis; sulfite from sulfate: step 1/3. In terms of biological role, catalyzes the first intracellular reaction of sulfate assimilation, forming adenosine-5'-phosphosulfate (APS) from inorganic sulfate and ATP. Plays an important role in sulfate activation as a component of the biosynthesis pathway of sulfur-containing amino acids. This Kluyveromyces lactis (strain ATCC 8585 / CBS 2359 / DSM 70799 / NBRC 1267 / NRRL Y-1140 / WM37) (Yeast) protein is Sulfate adenylyltransferase.